The chain runs to 66 residues: Large ribosomal subunit protein bL33c (66 aa).

This sequence belongs to the bacterial ribosomal protein bL33 family.

The protein localises to the plastid. Its subcellular location is the chloroplast. This Nandina domestica (Heavenly bamboo) protein is Large ribosomal subunit protein bL33c.